The following is a 343-amino-acid chain: Arginine N-succinyltransferase (343 aa).

Succinyl-CoA is bound at residue L125. Residue H229 is the Proton donor of the active site.

This sequence belongs to the arginine N-succinyltransferase family.

It carries out the reaction succinyl-CoA + L-arginine = N(2)-succinyl-L-arginine + CoA + H(+). The protein operates within amino-acid degradation; L-arginine degradation via AST pathway; L-glutamate and succinate from L-arginine: step 1/5. Its function is as follows. Catalyzes the transfer of succinyl-CoA to arginine to produce N(2)-succinylarginine. The sequence is that of Arginine N-succinyltransferase from Photorhabdus laumondii subsp. laumondii (strain DSM 15139 / CIP 105565 / TT01) (Photorhabdus luminescens subsp. laumondii).